A 998-amino-acid chain; its full sequence is Probable protein kinase DDB_G0277539 (998 aa).

6 disordered regions span residues 1-34, 65-207, 265-284, 316-367, 380-420, and 435-489; these read MDFPSQSEKKKYITKKRTTLFSYDDDDDDDDFDQ, CEDQ…TNEF, INNNYNNNNNNEEDQIFSSS, SNGS…NYSS, ERTN…PNSI, and RLQS…NNNN. The span at 23–32 shows a compositional bias: acidic residues; sequence YDDDDDDDDF. The segment covering 70–139 has biased composition (low complexity); it reads QQQQQQSSSP…NNNNNNNNNN (70 aa). Basic residues predominate over residues 140 to 150; sequence SHHHHLRKGRR. Polar residues predominate over residues 166 to 177; sequence ASLSSTKTNMFP. Low complexity-rich tracts occupy residues 184–203 and 265–274; these read SSPSSQQQQQQQQQQSQSQQ and INNNYNNNNN. The span at 316–328 shows a compositional bias: polar residues; sequence SNGSYNKGNTFPS. Over residues 330–340 the composition is skewed to basic and acidic residues; sequence EVKRVRPDQRA. Composition is skewed to low complexity over residues 393–415 and 450–489; these read NVNNNNNNNANNNNVNNNNNNNN and NNNNNNNNASNNNNDNNNNNNNNNNNNNNNDDTCNNNNNN. The Protein kinase domain occupies 508-849; sequence FQELDLIGEG…AEQLLEHPLI (342 aa). Residues 514 to 522 and Lys537 contribute to the ATP site; that span reads IGEGSFGHV. The active-site Proton acceptor is Asp631. Residues Asn636 and Glu677 each coordinate Mg(2+).

The protein belongs to the protein kinase superfamily. Ser/Thr protein kinase family. WEE1 subfamily.

The catalysed reaction is L-seryl-[protein] + ATP = O-phospho-L-seryl-[protein] + ADP + H(+). The enzyme catalyses L-threonyl-[protein] + ATP = O-phospho-L-threonyl-[protein] + ADP + H(+). The sequence is that of Probable protein kinase DDB_G0277539 from Dictyostelium discoideum (Social amoeba).